Here is a 316-residue protein sequence, read N- to C-terminus: tRNA-cytidine(32) 2-sulfurtransferase (316 aa).

Residues 52–57 (SGGKDS) carry the PP-loop motif motif. The [4Fe-4S] cluster site is built by Cys127, Cys130, and Cys218.

Belongs to the TtcA family. Homodimer. It depends on Mg(2+) as a cofactor. Requires [4Fe-4S] cluster as cofactor.

The protein resides in the cytoplasm. The catalysed reaction is cytidine(32) in tRNA + S-sulfanyl-L-cysteinyl-[cysteine desulfurase] + AH2 + ATP = 2-thiocytidine(32) in tRNA + L-cysteinyl-[cysteine desulfurase] + A + AMP + diphosphate + H(+). Its pathway is tRNA modification. In terms of biological role, catalyzes the ATP-dependent 2-thiolation of cytidine in position 32 of tRNA, to form 2-thiocytidine (s(2)C32). The sulfur atoms are provided by the cysteine/cysteine desulfurase (IscS) system. The chain is tRNA-cytidine(32) 2-sulfurtransferase from Haemophilus ducreyi (strain 35000HP / ATCC 700724).